The following is a 421-amino-acid chain: Eukaryotic translation initiation factor 3 subunit E (421 aa).

In terms of domain architecture, PCI spans 215–394 (FFQNDTKGKD…STVILNHPSV (180 aa)).

It belongs to the eIF-3 subunit E family. Component of the eukaryotic translation initiation factor 3 (eIF-3) complex.

Its subcellular location is the cytoplasm. Component of the eukaryotic translation initiation factor 3 (eIF-3) complex, which is involved in protein synthesis of a specialized repertoire of mRNAs and, together with other initiation factors, stimulates binding of mRNA and methionyl-tRNAi to the 40S ribosome. The eIF-3 complex specifically targets and initiates translation of a subset of mRNAs involved in cell proliferation. This chain is Eukaryotic translation initiation factor 3 subunit E, found in Yarrowia lipolytica (strain CLIB 122 / E 150) (Yeast).